The primary structure comprises 201 residues: Lymphotoxin-alpha (201 aa).

The N-terminal stretch at 1-27 (MTSSGVLCLLGALSLQVLLLQPPGAQG) is a signal peptide. The tract at residues 23 to 52 (PGAQGAPNPDNSHSSSPAPPQTAQHLSQKS) is disordered. Residues 31 to 51 (PDNSHSSSPAPPQTAQHLSQK) are compositionally biased toward polar residues. A THD domain is found at 60–201 (PAAHLVGDPS…SSVFFGAFAL (142 aa)). N-linked (GlcNAc...) asparagine glycosylation occurs at N93. C117 and C152 form a disulfide bridge.

This sequence belongs to the tumor necrosis factor family. As to quaternary structure, homotrimer, and heterotrimer of either two LTB and one LTA subunits or (less prevalent) two LTA and one LTB subunits. Interacts with TNFRSF14.

The protein localises to the secreted. The protein resides in the membrane. Cytokine that in its homotrimeric form binds to TNFRSF1A/TNFR1, TNFRSF1B/TNFBR and TNFRSF14/HVEM. In its heterotrimeric form with LTB binds to TNFRSF3/LTBR. Lymphotoxin is produced by lymphocytes and is cytotoxic for a wide range of tumor cells in vitro and in vivo. This is Lymphotoxin-alpha (LTA) from Notamacropus eugenii (Tammar wallaby).